Here is a 211-residue protein sequence, read N- to C-terminus: ATP phosphoribosyltransferase (211 aa).

Belongs to the ATP phosphoribosyltransferase family. Short subfamily. Heteromultimer composed of HisG and HisZ subunits.

The protein resides in the cytoplasm. The enzyme catalyses 1-(5-phospho-beta-D-ribosyl)-ATP + diphosphate = 5-phospho-alpha-D-ribose 1-diphosphate + ATP. It functions in the pathway amino-acid biosynthesis; L-histidine biosynthesis; L-histidine from 5-phospho-alpha-D-ribose 1-diphosphate: step 1/9. Functionally, catalyzes the condensation of ATP and 5-phosphoribose 1-diphosphate to form N'-(5'-phosphoribosyl)-ATP (PR-ATP). Has a crucial role in the pathway because the rate of histidine biosynthesis seems to be controlled primarily by regulation of HisG enzymatic activity. In Bacillus cereus (strain ATCC 10987 / NRS 248), this protein is ATP phosphoribosyltransferase.